The sequence spans 465 residues: Cytochrome P450 85A2 (465 aa).

A helical membrane pass occupies residues 2 to 22; sequence GIMMMILGLLVIIVCLCTALL. Cysteine 415 serves as a coordination point for heme. Residue cysteine 462 is the site of S-farnesyl cysteine attachment. The Farnesylation CAAX motif motif lies at 462 to 465; sequence CSPY.

This sequence belongs to the cytochrome P450 family. Heme is required as a cofactor. In terms of processing, isoprenylated (farnesylated); this addition of a 15-carbon farnesyl isoprenoid to the carboxy terminus is required for endoplasmic reticulum localization and essential for the biosynthesis of brassinolide. As to expression, expressed in stems, hypocotyls, leaves, siliques, shoots, and roots, with a higher expression in apical shoots.

The protein resides in the membrane. It is found in the endoplasmic reticulum. The enzyme catalyses 6-deoxoteasterone + reduced [NADPH--hemoprotein reductase] + O2 = 6alpha-hydroxyteasterone + oxidized [NADPH--hemoprotein reductase] + H2O + H(+). It carries out the reaction 6alpha-hydroxytyphasterol + reduced [NADPH--hemoprotein reductase] + O2 = teasterone + oxidized [NADPH--hemoprotein reductase] + 2 H2O + H(+). It catalyses the reaction 3-dehydro-6-deoxoteasterone + reduced [NADPH--hemoprotein reductase] + O2 = 3-dehydro-6alpha-hydroxyteasterone + oxidized [NADPH--hemoprotein reductase] + H2O + H(+). The catalysed reaction is 3-dehydro-6alpha-hydroxyteasterone + reduced [NADPH--hemoprotein reductase] + O2 = 3-dehydroteasterone + oxidized [NADPH--hemoprotein reductase] + 2 H2O + H(+). The enzyme catalyses 6-deoxotyphasterol + reduced [NADPH--hemoprotein reductase] + O2 = 6alpha-hydroxytyphasterol + oxidized [NADPH--hemoprotein reductase] + H2O + H(+). It carries out the reaction 6alpha-hydroxytyphasterol + reduced [NADPH--hemoprotein reductase] + O2 = typhasterol + oxidized [NADPH--hemoprotein reductase] + 2 H2O + H(+). It catalyses the reaction 6-deoxocastasterone + reduced [NADPH--hemoprotein reductase] + O2 = 6alpha-hydroxycastasterone + oxidized [NADPH--hemoprotein reductase] + H2O + H(+). The catalysed reaction is 6alpha-hydroxycastasterone + reduced [NADPH--hemoprotein reductase] + O2 = castasterone + oxidized [NADPH--hemoprotein reductase] + 2 H2O + H(+). The enzyme catalyses 6-deoxo-28-norteasterone + 2 reduced [NADPH--hemoprotein reductase] + 2 O2 = 28-norteasterone + 2 oxidized [NADPH--hemoprotein reductase] + 3 H2O + 2 H(+). It carries out the reaction 6-deoxo-28-norteasterone + reduced [NADPH--hemoprotein reductase] + O2 = 6alpha-hydroxy-28-norteasterone + oxidized [NADPH--hemoprotein reductase] + H2O + H(+). It catalyses the reaction 6alpha-hydroxy-28-norteasterone + reduced [NADPH--hemoprotein reductase] + O2 = 28-norteasterone + oxidized [NADPH--hemoprotein reductase] + 2 H2O + H(+). The catalysed reaction is 6-deoxo-28-nortyphasterol + 2 reduced [NADPH--hemoprotein reductase] + 2 O2 = 28-nortyphasterol + 2 oxidized [NADPH--hemoprotein reductase] + 3 H2O + 2 H(+). The enzyme catalyses 6-deoxo-28-nortyphasterol + reduced [NADPH--hemoprotein reductase] + O2 = 6alpha-hydroxy-28-nortyphasterol + oxidized [NADPH--hemoprotein reductase] + H2O + H(+). It carries out the reaction 6alpha-hydroxy-28-nortyphasterol + reduced [NADPH--hemoprotein reductase] + O2 = 28-nortyphasterol + oxidized [NADPH--hemoprotein reductase] + 2 H2O + H(+). It catalyses the reaction 6-deoxo-28-norcastasterone + 2 reduced [NADPH--hemoprotein reductase] + 2 O2 = 28-norcastasterone + 2 oxidized [NADPH--hemoprotein reductase] + 3 H2O + 2 H(+). The catalysed reaction is 6-deoxo-28-norcastasterone + reduced [NADPH--hemoprotein reductase] + O2 = 6alpha-hydroxy-28-norcastasterone + oxidized [NADPH--hemoprotein reductase] + H2O + H(+). The enzyme catalyses 6alpha-hydroxy-28-norcastasterone + reduced [NADPH--hemoprotein reductase] + O2 = 28-norcastasterone + oxidized [NADPH--hemoprotein reductase] + 2 H2O + H(+). It carries out the reaction 3-dehydro-6-deoxo-28-norteasterone + 2 reduced [NADPH--hemoprotein reductase] + 2 O2 = 6-dehydro-28-norteasterone + 2 oxidized [NADPH--hemoprotein reductase] + 3 H2O + 2 H(+). It catalyses the reaction 3-dehydro-6-deoxo-28-norteasterone + reduced [NADPH--hemoprotein reductase] + O2 = 3-dehydro-6alpha-hydroxy-28-norteasterone + oxidized [NADPH--hemoprotein reductase] + H2O + H(+). The catalysed reaction is 3-dehydro-6alpha-hydroxy-28-norteasterone + reduced [NADPH--hemoprotein reductase] + O2 = 6-dehydro-28-norteasterone + oxidized [NADPH--hemoprotein reductase] + 2 H2O + H(+). The enzyme catalyses teasterone + reduced [NADPH--hemoprotein reductase] + O2 = 7-oxateasterone + oxidized [NADPH--hemoprotein reductase] + H2O + H(+). It carries out the reaction castasterone + reduced [NADPH--hemoprotein reductase] + O2 = brassinolide + oxidized [NADPH--hemoprotein reductase] + H2O + H(+). It catalyses the reaction typhasterol + reduced [NADPH--hemoprotein reductase] + O2 = 7-oxatyphasterol + oxidized [NADPH--hemoprotein reductase] + H2O + H(+). The catalysed reaction is 6-deoxocastasterone + 2 reduced [NADPH--hemoprotein reductase] + 2 O2 = castasterone + 2 oxidized [NADPH--hemoprotein reductase] + 3 H2O + 2 H(+). The enzyme catalyses 6-deoxoteasterone + 2 reduced [NADPH--hemoprotein reductase] + 2 O2 = teasterone + 2 oxidized [NADPH--hemoprotein reductase] + 3 H2O + 2 H(+). It carries out the reaction 6-deoxotyphasterol + 2 reduced [NADPH--hemoprotein reductase] + 2 O2 = typhasterol + 2 oxidized [NADPH--hemoprotein reductase] + 3 H2O + 2 H(+). It catalyses the reaction 3-dehydro-6-deoxoteasterone + 2 reduced [NADPH--hemoprotein reductase] + 2 O2 = 3-dehydroteasterone + 2 oxidized [NADPH--hemoprotein reductase] + 3 H2O + 2 H(+). It functions in the pathway plant hormone biosynthesis; brassinosteroid biosynthesis. In terms of biological role, mediates Baeyer-Villiger oxidation and catalyzes the C6-oxidation step and lactonization in brassinosteroids biosynthesis. Converts 6-deoxocastasterone (6-deoxoCS) to castasterone (CS), and castasterone to brassinolide (BL). May also convert 6-deoxoteasterone (6-deoxoTE) to teasterone (TE), 3-dehydro-6-deoxoteasterone (6-deoxo3DT, 6-deoxo-3-DHT) to 3-dehydroteasterone (3DT, 3-DHT), and 6-deoxotyphasterol (6-deoxoTY) to typhasterol (TY). Also seems to be able to convert teasterone (TE) and typhasterol (TY) to 7-oxateasterone (7-OXTE) and 7-oxatyphasterol (7-OXTY), respectively. Catalyzes the conversion of 6-deoxo-28-norteasterone (6-deoxo-28-norTE) to 28-norteasterone (28-norTE), 6-deoxo-28-nordeoxoteasterone (6-deoxo-28-nor-3-DHT) to 28-nordeoxoteasterone (28-nor-3-DHT), 6-deoxo-28-nortyphasterol (6-deoxo-28-norTY) to 28-nortyphasterol (28-norTY) and 6-deoxo-28-norcastasterone (6-deoxo-28-norCS) to 28-norcastasterone (28-norCS). Involved in a negative regulation of responses to abscisic acid (ABA) and drought tolerance. The protein is Cytochrome P450 85A2 (CYP85A2) of Arabidopsis thaliana (Mouse-ear cress).